Reading from the N-terminus, the 200-residue chain is uncharacterized protein (200 aa).

Positions 1 to 21 are disordered; it reads MSNSAQRDARNSRDESARASD. The span at 7-21 shows a compositional bias: basic and acidic residues; sequence RDARNSRDESARASD.

This is an uncharacterized protein from Mycobacterium tuberculosis (strain ATCC 25618 / H37Rv).